A 156-amino-acid chain; its full sequence is Large ribosomal subunit protein uL15 (156 aa).

The segment at 25–48 (RGIGCGKGKTSGRGHKGQKARSGV) is disordered. Residues 34–43 (TSGRGHKGQK) are compositionally biased toward basic residues.

It belongs to the universal ribosomal protein uL15 family. As to quaternary structure, part of the 50S ribosomal subunit.

Functionally, binds to the 23S rRNA. In Wolbachia pipientis subsp. Culex pipiens (strain wPip), this protein is Large ribosomal subunit protein uL15.